The sequence spans 490 residues: Bifunctional NAD(P)H-hydrate repair enzyme Nnr (490 aa).

The region spanning 1 to 204 (MKEIDELTIK…NIGHPVHLIN (204 aa)) is the YjeF N-terminal domain. Residues 1–204 (MKEIDELTIK…NIGHPVHLIN (204 aa)) are NAD(P)H-hydrate epimerase. The tract at residues 51 to 55 (NNGGD) is NADPHX 1; for epimerase activity. Positions 52 and 114 each coordinate K(+). The NADPHX 1; for epimerase activity stretch occupies residues 118 to 124 (GTGLRGE). Residues Tyr129 and Asp147 each contribute to the (6S)-NADPHX site. Residue Ser150 participates in K(+) binding. The region spanning 212 to 488 (TREMVRSLLP…RLIPEAIRRL (277 aa)) is the YjeF C-terminal domain. The segment at 212 to 490 (TREMVRSLLP…IPEAIRRLKE (279 aa)) is ADP-dependent (S)-NAD(P)H-hydrate dehydratase. Gly317 contributes to the (6S)-NADPHX binding site. The NADPHX 2; for dehydratase activity stretch occupies residues 366-372 (HPGEMAR). Residues 402-406 (KSATT) and 421-430 (NTGLSKGGSG) each bind ADP. Residue Asp431 coordinates (6S)-NADPHX.

This sequence in the N-terminal section; belongs to the NnrE/AIBP family. In the C-terminal section; belongs to the NnrD/CARKD family. The cofactor is K(+).

The catalysed reaction is (6S)-NADHX + ADP = AMP + phosphate + NADH + H(+). It carries out the reaction (6S)-NADPHX + ADP = AMP + phosphate + NADPH + H(+). The enzyme catalyses (6R)-NADHX = (6S)-NADHX. It catalyses the reaction (6R)-NADPHX = (6S)-NADPHX. Functionally, bifunctional enzyme that catalyzes the epimerization of the S- and R-forms of NAD(P)HX and the dehydration of the S-form of NAD(P)HX at the expense of ADP, which is converted to AMP. This allows the repair of both epimers of NAD(P)HX, a damaged form of NAD(P)H that is a result of enzymatic or heat-dependent hydration. The polypeptide is Bifunctional NAD(P)H-hydrate repair enzyme Nnr (nnr) (Thermotoga maritima (strain ATCC 43589 / DSM 3109 / JCM 10099 / NBRC 100826 / MSB8)).